A 101-amino-acid polypeptide reads, in one-letter code: Small ribosomal subunit protein uS14 (101 aa).

Belongs to the universal ribosomal protein uS14 family. As to quaternary structure, part of the 30S ribosomal subunit. Contacts proteins S3 and S10.

In terms of biological role, binds 16S rRNA, required for the assembly of 30S particles and may also be responsible for determining the conformation of the 16S rRNA at the A site. In Escherichia coli O8 (strain IAI1), this protein is Small ribosomal subunit protein uS14.